A 317-amino-acid polypeptide reads, in one-letter code: Methyltransferase CPUR_05424 (317 aa).

Residues 57–149 are methyltransferase domain; that stretch reads DVGAGNGPYA…QLRPGGTFAC (93 aa).

The protein belongs to the methyltransferase superfamily.

The protein operates within pigment biosynthesis. Methyltransferase; part of the ergochrome gene cluster responsible for the typical purple-black color of the ergot sclerotia. The ergochrome gene cluster produces several ergot pigments including the yellow ergochrome secalonic acid and its derivatives, as well as the red anthraquinones endocrocin and clavorubin. The pathway begins with the synthesis of atrochrysone thioester by the polyketide synthase (PKS) CPUR_05437. The atrochrysone carboxyl ACP thioesterase CPUR_05436 then breaks the thioester bond and releases the atrochrysone carboxylic acid from CPUR_05437. The atrochrysone carboxylic acid is then converted to atrochrysone which is further transformed into emodin anthrone. The next step is performed by the anthrone oxygenase CPUR_05434 that catalyzes the oxidation of emodinanthrone to emodin. Emodin is further modified to yield monodictyphenone via several steps involving CPUR_05427, CPUR_05428, CPUR_05429 and CPUR_05430. The short chain dehydrogenase/reductase CPUR_05418 then catalyzes the C-5 ketoreduction to give the xanthone skeleton of the monomeric units. Ergochromes formation requires further dimerization steps of different xanthone units, probably catalyzed by the cytochrome P450 monooxygenase CPUR_05419. CPUR_05425, CPUR_05426 and CPUR_05431 are unique to Claviceps, thus it is likely that they are involved in further modification of xanthone units or in their dimerization. The yellow ergochromes and the red anthraquinone pigments endocrocin and clavorubin are products from the same PKS derived precursors and the latter are likely shunt products in the pathway of xanthone biosynthesis. It is proposed that atrochrysone carboxylic acid released from the PKS CPUR_05437 can also be converted to endocrocin anthrone which is further oxidized into endocrocin by CPUR_05435. Endocrocin could be then modified to clavorubin, possibly by CPUR_05423 and CPUR_05431. Clavorubin is the principal anthraquinone metabolite produced by the cluster with a much higher yield compared to endocrocin. In Claviceps purpurea (strain 20.1) (Ergot fungus), this protein is Methyltransferase CPUR_05424.